A 185-amino-acid chain; its full sequence is MAAEKDQQKDAEPEGLSATTLLPKLIPSGAGRERLERRRATIRPWSSFVDQRRFSRPRNLGELCQRLVRNVEYYQSNYVFVFLGLILYCVVTSPMLLVALAVFFGACYILYLRTLQSKFVLFGREVSPAHQYALAGGVSFPFFWLAGAGSAVFWVLGATLVVIGSHAAFHQMEAVDGEELQMEPV.

The Cytoplasmic portion of the chain corresponds to 1 to 78 (MAAEKDQQKD…RNVEYYQSNY (78 aa)). The required for interaction with prenylated RAB3A and VAMP2 stretch occupies residues 30–54 (AGRERLERRRATIRPWSSFVDQRRF). A run of 2 helical transmembrane segments spans residues 79–94 (VFVFLGLILYCVVTSP) and 95–112 (MLLVALAVFFGACYILYL). The Cytoplasmic portion of the chain corresponds to 113 to 131 (RTLQSKFVLFGREVSPAHQ). Helical transmembrane passes span 132–148 (YALAGGVSFPFFWLAGA) and 149–165 (GSAVFWVLGATLVVIGS). The required for interaction with GDI1 stretch occupies residues 165–185 (SHAAFHQMEAVDGEELQMEPV). Residues 166 to 185 (HAAFHQMEAVDGEELQMEPV) are Cytoplasmic-facing. The interval 175–185 (VDGEELQMEPV) is required for interaction with prenylated RAB3A and VAMP2. Residues 175 to 185 (VDGEELQMEPV) form a homodimerization region.

It belongs to the PRA1 family. In terms of assembly, homodimer. Interacts with VAMP2 (synaptobrevin-2), prenylated Rab proteins, GDI1, NDRG1 and PCLO.

It is found in the cell membrane. Its subcellular location is the cytoplasm. It localises to the golgi apparatus. The protein resides in the cytoplasmic vesicle. The protein localises to the secretory vesicle. It is found in the synaptic vesicle. In terms of biological role, general Rab protein regulator required for vesicle formation from the Golgi complex. May control vesicle docking and fusion by mediating the action of Rab GTPases to the SNARE complexes. In addition it inhibits the removal of Rab GTPases from the membrane by GDI1. This chain is Prenylated Rab acceptor protein 1 (RABAC1), found in Canis lupus familiaris (Dog).